Reading from the N-terminus, the 90-residue chain is uncharacterized protein (90 aa).

Residues 1–20 (MEKLFVLVFALTLLAFSSEA) form the signal peptide. Positions 31-50 (QLLRSRRQDRPSKPGFPDEP) are disordered.

Its subcellular location is the secreted. This is an uncharacterized protein from Rattus norvegicus (Rat).